Reading from the N-terminus, the 130-residue chain is Small ribosomal subunit protein uS9 (130 aa).

Belongs to the universal ribosomal protein uS9 family.

This chain is Small ribosomal subunit protein uS9, found in Magnetococcus marinus (strain ATCC BAA-1437 / JCM 17883 / MC-1).